Reading from the N-terminus, the 347-residue chain is Trace amine-associated receptor 4 (347 aa).

Residues 1-37 are Extracellular-facing; it reads MNSPDLWYSPETQFCFAAANNSCPRKARPALVVCAMY. N-linked (GlcNAc...) asparagine glycosylation occurs at Asn20. 2 disulfide bridges follow: Cys23–Cys187 and Cys106–Cys191. A helical membrane pass occupies residues 38-58; the sequence is LVMIGAIVMTMLGNMVVIISI. Over 59 to 69 the chain is Cytoplasmic; the sequence is AHFKQLHSPTN. Residues 70–90 form a helical membrane-spanning segment; it reads FLILSMATTDFLLSCVVMPFS. Topologically, residues 91–110 are extracellular; sequence MVRSIESCWYFGDLFCKVHS. The helical transmembrane segment at 111–129 threads the bilayer; it reads CCDIMLCTTSIFHLCFISV. The Cytoplasmic portion of the chain corresponds to 130 to 149; the sequence is DRHYAVCDPLHYVTQITVGV. Residues 150 to 170 traverse the membrane as a helical segment; it reads VGVFLLISWSVPILFAFGLVF. Over 171-197 the chain is Extracellular; it reads SELNLIGAEDFVAAIDCTGLCVLIFNK. The interval 175–188 is extracellular Loop 2 (ECL2); the sequence is LIGAEDFVAAIDCT. The helical transmembrane segment at 198–218 threads the bilayer; sequence LWGVLASFIAFFLPGAIMVGI. Residues 219-260 lie on the Cytoplasmic side of the membrane; that stretch reads YIHIFTVARKHARKIGPGPRTKRALSESKMKATSGKESKATK. A helical membrane pass occupies residues 261-281; it reads TLSIVMGVFVLCWLPFFVLTI. At 282-296 the chain is on the extracellular side; the sequence is TDPFIGFTTPEDLYN. A helical membrane pass occupies residues 297-317; that stretch reads VFLWLGYFNSTFNPIIYGMFY. Residues 318–347 are Cytoplasmic-facing; the sequence is PWFRKALRMIVTGTIFRSDSSTSSLHPAHP.

Belongs to the G-protein coupled receptor 1 family.

It is found in the cell membrane. Its function is as follows. Olfactory receptor specific for 2-phenylethylamine, a trace amine present at high concentration in the urine of carnivore species, playing a key role in fear and avoidance responses. 2-phenylethylamine acts as a kairomone in the chemical detection of carnivore odor and triggers fear in rats. This receptor is probably mediated by the G(s)-class of G-proteins which activate adenylate cyclase. The sequence is that of Trace amine-associated receptor 4 from Rattus norvegicus (Rat).